The sequence spans 374 residues: 4-hydroxy-3-methylbut-2-en-1-yl diphosphate synthase (flavodoxin) (374 aa).

C272, C275, C307, and E314 together coordinate [4Fe-4S] cluster.

This sequence belongs to the IspG family. [4Fe-4S] cluster serves as cofactor.

The catalysed reaction is (2E)-4-hydroxy-3-methylbut-2-enyl diphosphate + oxidized [flavodoxin] + H2O + 2 H(+) = 2-C-methyl-D-erythritol 2,4-cyclic diphosphate + reduced [flavodoxin]. The protein operates within isoprenoid biosynthesis; isopentenyl diphosphate biosynthesis via DXP pathway; isopentenyl diphosphate from 1-deoxy-D-xylulose 5-phosphate: step 5/6. Converts 2C-methyl-D-erythritol 2,4-cyclodiphosphate (ME-2,4cPP) into 1-hydroxy-2-methyl-2-(E)-butenyl 4-diphosphate. This is 4-hydroxy-3-methylbut-2-en-1-yl diphosphate synthase (flavodoxin) from Acidiphilium cryptum (strain JF-5).